The primary structure comprises 149 residues: Ribonuclease HI (149 aa).

The RNase H type-1 domain maps to 1-142; that stretch reads MTPKVTIYTD…ADALANEGLR (142 aa). 4 residues coordinate Mg(2+): D10, E48, D70, and D134.

Belongs to the RNase H family. In terms of assembly, monomer. The cofactor is Mg(2+).

The protein resides in the cytoplasm. It catalyses the reaction Endonucleolytic cleavage to 5'-phosphomonoester.. In terms of biological role, endonuclease that specifically degrades the RNA of RNA-DNA hybrids. In Caulobacter vibrioides (strain ATCC 19089 / CIP 103742 / CB 15) (Caulobacter crescentus), this protein is Ribonuclease HI.